Here is a 184-residue protein sequence, read N- to C-terminus: UPF0149 protein PSPTO_5224 (184 aa).

The protein belongs to the UPF0149 family.

In Pseudomonas syringae pv. tomato (strain ATCC BAA-871 / DC3000), this protein is UPF0149 protein PSPTO_5224.